Here is a 1152-residue protein sequence, read N- to C-terminus: Integrin alpha-M (1152 aa).

Positions 1–16 are cleaved as a signal peptide; it reads MALRVLLLTALTLCHG. The Extracellular portion of the chain corresponds to 17 to 1104; it reads FNLDTENAMT…TKVEPFEVPN (1088 aa). FG-GAP repeat units lie at residues 18–75 and 76–135; these read NLDT…SCEP and IRLQ…QQPQ. Cys66 and Cys73 are oxidised to a cystine. A glycan (N-linked (GlcNAc...) asparagine) is linked at Asn86. An intrachain disulfide couples Cys105 to Cys123. A VWFA domain is found at 150–328; the sequence is DIAFLIDGSG…EALKTIQNQL (179 aa). N-linked (GlcNAc...) asparagine glycosylation occurs at Asn240. 5 FG-GAP repeats span residues 339 to 390, 391 to 442, 443 to 503, 506 to 564, and 569 to 629; these read QTGS…STFI, NMTR…TGMW, ESNA…RARW, DAVL…SGIS, and QRIA…FNPR. An N-linked (GlcNAc...) asparagine glycan is attached at Asn391. Residues Asp465, Asp467, Asn469, Asp473, Asp529, Asn531, Asp533, Asp537, Asp592, Asp596, and Asp600 each coordinate Ca(2+). N-linked (GlcNAc...) asparagine glycosylation is present at Asn469. An intrachain disulfide couples Cys654 to Cys711. 3 N-linked (GlcNAc...) asparagine glycosylation sites follow: Asn692, Asn696, and Asn734. Cysteines 770 and 776 form a disulfide. An N-linked (GlcNAc...) asparagine glycan is attached at Asn801. A disulfide bridge links Cys847 with Cys864. Residues Asn880, Asn900, Asn911, Asn940, Asn946, Asn978, Asn993, and Asn1021 are each glycosylated (N-linked (GlcNAc...) asparagine). Cystine bridges form between Cys998–Cys1022 and Cys1027–Cys1032. N-linked (GlcNAc...) asparagine glycosylation is found at Asn1044, Asn1050, and Asn1075. The chain crosses the membrane as a helical span at residues 1105–1128; that stretch reads PLPLIVGSSVGGLLLLALITAALY. Residues 1129 to 1152 lie on the Cytoplasmic side of the membrane; it reads KLGFFKRQYKDMMSEGGPPGAEPQ. The short motif at 1131 to 1135 is the GFFKR motif element; the sequence is GFFKR.

This sequence belongs to the integrin alpha chain family. Heterodimer of an alpha and a beta subunit. ITGAM associates with ITGB2. Found in a complex with CD177 and ITGB2/CD18. Interacts with JAM3. Interacts with THBD. Interacts with complement factor H/CFH; this interaction mediates adhesion of neutrophils to pathogens leading to pathogen clearance. Interacts with TMEM268; this interaction inhibits ITGAM degradation via the endosome-lysosome pathway. As to expression, predominantly expressed in monocytes and granulocytes. Expressed in neutrophils (at protein level).

The protein resides in the cell membrane. It localises to the membrane raft. Integrin ITGAM/ITGB2 is implicated in various adhesive interactions of monocytes, macrophages and granulocytes as well as in mediating the uptake of complement-coated particles and pathogens. It is identical with CR-3, the receptor for the iC3b fragment of the third complement component. It probably recognizes the R-G-D peptide in C3b. Integrin ITGAM/ITGB2 is also a receptor for fibrinogen, factor X and ICAM1. It recognizes P1 and P2 peptides of fibrinogen gamma chain. Regulates neutrophil migration. In association with beta subunit ITGB2/CD18, required for CD177-PRTN3-mediated activation of TNF primed neutrophils. May regulate phagocytosis-induced apoptosis in extravasated neutrophils. May play a role in mast cell development. Required with TYROBP/DAP12 in microglia to control production of microglial superoxide ions which promote the neuronal apoptosis that occurs during brain development. This Homo sapiens (Human) protein is Integrin alpha-M (ITGAM).